Reading from the N-terminus, the 587-residue chain is Lipoprotein LpqB (587 aa).

A signal peptide spans 1 to 19 (MERLMRLTILLFLGAVLAG). Cys-20 carries the N-palmitoyl cysteine lipid modification. Cys-20 carries S-diacylglycerol cysteine lipidation.

Belongs to the LpqB lipoprotein family. Interacts with MtrB, probably extracytoplasmically.

The protein resides in the cell membrane. Its subcellular location is the secreted. The protein localises to the cell wall. Functionally, may modulate activity of the MtrAB system in controlling homeostasis of the cell wall and cell division. In Mycobacterium tuberculosis (strain CDC 1551 / Oshkosh), this protein is Lipoprotein LpqB.